A 758-amino-acid polypeptide reads, in one-letter code: 5-methyltetrahydropteroyltriglutamate--homocysteine methyltransferase (758 aa).

Residues 16 to 19 (RELK) and lysine 117 contribute to the 5-methyltetrahydropteroyltri-L-glutamate site. L-homocysteine-binding positions include 436 to 438 (IGS) and glutamate 489. Residues 436–438 (IGS) and glutamate 489 each bind L-methionine. 5-methyltetrahydropteroyltri-L-glutamate-binding positions include 520–521 (RC) and tryptophan 566. Aspartate 604 contributes to the L-homocysteine binding site. Aspartate 604 is a binding site for L-methionine. Residue glutamate 610 participates in 5-methyltetrahydropteroyltri-L-glutamate binding. 3 residues coordinate Zn(2+): histidine 646, cysteine 648, and glutamate 670. Histidine 699 (proton donor) is an active-site residue. Residue cysteine 731 coordinates Zn(2+).

This sequence belongs to the vitamin-B12 independent methionine synthase family. It depends on Zn(2+) as a cofactor.

It catalyses the reaction 5-methyltetrahydropteroyltri-L-glutamate + L-homocysteine = tetrahydropteroyltri-L-glutamate + L-methionine. It participates in amino-acid biosynthesis; L-methionine biosynthesis via de novo pathway; L-methionine from L-homocysteine (MetE route): step 1/1. In terms of biological role, catalyzes the transfer of a methyl group from 5-methyltetrahydrofolate to homocysteine resulting in methionine formation. In Ruthia magnifica subsp. Calyptogena magnifica, this protein is 5-methyltetrahydropteroyltriglutamate--homocysteine methyltransferase.